The sequence spans 165 residues: MGGYRVGLGVDVHAFADPAEGRQLVLGGVRIPSERGLRGHSDADVLAHAVTDALLGAAGLEDIGHYFPDTDERFRDADSIWLLREARRIVGGGWEVVNVDAVVICERPRIREHREKMRENLAAALGVEASRVSVRGTTSERLGFTGRGEGIAAQAVCLLERAVGT.

Residues Asp-11 and His-13 each coordinate a divalent metal cation. 4-CDP-2-C-methyl-D-erythritol 2-phosphate is bound by residues 11–13 (DVH) and 40–41 (HS). His-48 lines the a divalent metal cation pocket. 4-CDP-2-C-methyl-D-erythritol 2-phosphate contacts are provided by residues 62–64 (DIG), 67–71 (FPDTD), 137–140 (TTSE), Phe-144, and Arg-147.

It belongs to the IspF family. In terms of assembly, homotrimer. The cofactor is a divalent metal cation.

The catalysed reaction is 4-CDP-2-C-methyl-D-erythritol 2-phosphate = 2-C-methyl-D-erythritol 2,4-cyclic diphosphate + CMP. Its pathway is isoprenoid biosynthesis; isopentenyl diphosphate biosynthesis via DXP pathway; isopentenyl diphosphate from 1-deoxy-D-xylulose 5-phosphate: step 4/6. Involved in the biosynthesis of isopentenyl diphosphate (IPP) and dimethylallyl diphosphate (DMAPP), two major building blocks of isoprenoid compounds. Catalyzes the conversion of 4-diphosphocytidyl-2-C-methyl-D-erythritol 2-phosphate (CDP-ME2P) to 2-C-methyl-D-erythritol 2,4-cyclodiphosphate (ME-CPP) with a corresponding release of cytidine 5-monophosphate (CMP). The chain is 2-C-methyl-D-erythritol 2,4-cyclodiphosphate synthase from Rubrobacter xylanophilus (strain DSM 9941 / JCM 11954 / NBRC 16129 / PRD-1).